Here is a 546-residue protein sequence, read N- to C-terminus: Smad protein daf-8 (546 aa).

Residues A16–Q137 enclose the MH1 domain. Disordered stretches follow at residues L234–N268 and E292–P317. Polar residues predominate over residues E292–R302. Residues W349 to T546 enclose the MH2 domain.

The protein belongs to the dwarfin/SMAD family. Homodimer. Interacts with R-SMAD daf-14 and co-SMAD daf-3. Interacts with orphan nuclear receptor nhr-69. As to expression, expressed in the excretory cell and gonadal distal tip cells (DTCs).

The protein localises to the cytoplasm. It localises to the nucleus. Its function is as follows. Probably a receptor-regulated SMAD (R-SMAD) that is an intracellular signal transducer and transcriptional modulator activated by TGF-beta-like daf-7 signaling. Plays a role in TGF-beta-like daf-7 signaling in regulating entry into a developmentally arrested larval state known as dauer, in response to harsh environmental conditions; partially redundant with R-SMAD daf-14. Plays a role in inhibiting mitosis and promoting a switch to meiosis in the germ line, perhaps by down-regulating lag-2 transcription in the gonadal distal tip cells (DTCs). In cooperation with orphan nuclear receptor nhr-69 modulates the Insulin/IGF-1-like signaling (IIS) pathway, perhaps by regulating expression of the potassium channel exp-2, which in turn modulates the secretion of the insulin-like peptide daf-28. This Caenorhabditis elegans protein is Smad protein daf-8.